The following is a 342-amino-acid chain: Nucleoid-associated protein Shewmr7_2293 (342 aa).

Belongs to the YejK family.

The protein resides in the cytoplasm. Its subcellular location is the nucleoid. This is Nucleoid-associated protein Shewmr7_2293 from Shewanella sp. (strain MR-7).